Here is a 220-residue protein sequence, read N- to C-terminus: Large ribosomal subunit protein uL16 (220 aa).

This sequence belongs to the universal ribosomal protein uL16 family. Component of the small ribosomal subunit. Mature ribosomes consist of a small (40S) and a large (60S) subunit. The 40S subunit contains about 33 different proteins and 1 molecule of RNA (18S). The 60S subunit contains about 49 different proteins and 3 molecules of RNA (25S, 5.8S and 5S).

This chain is Large ribosomal subunit protein uL16 (RPL10), found in Vitis riparia (Frost grape).